The primary structure comprises 105 residues: Thiosulfate sulfurtransferase GlpE (105 aa).

The 89-residue stretch at 15–103 (MQQGAILVDI…WCRAELPIDT (89 aa)) folds into the Rhodanese domain. C63 functions as the Cysteine persulfide intermediate in the catalytic mechanism.

This sequence belongs to the GlpE family.

The protein resides in the cytoplasm. It catalyses the reaction thiosulfate + hydrogen cyanide = thiocyanate + sulfite + 2 H(+). The catalysed reaction is thiosulfate + [thioredoxin]-dithiol = [thioredoxin]-disulfide + hydrogen sulfide + sulfite + 2 H(+). Its function is as follows. Transferase that catalyzes the transfer of sulfur from thiosulfate to thiophilic acceptors such as cyanide or dithiols. May function in a CysM-independent thiosulfate assimilation pathway by catalyzing the conversion of thiosulfate to sulfite, which can then be used for L-cysteine biosynthesis. This Haemophilus influenzae (strain ATCC 51907 / DSM 11121 / KW20 / Rd) protein is Thiosulfate sulfurtransferase GlpE.